Here is a 161-residue protein sequence, read N- to C-terminus: Nucleotide-binding protein lpg1167 (161 aa).

Belongs to the YajQ family.

Its function is as follows. Nucleotide-binding protein. This chain is Nucleotide-binding protein lpg1167, found in Legionella pneumophila subsp. pneumophila (strain Philadelphia 1 / ATCC 33152 / DSM 7513).